The chain runs to 426 residues: Enolase (426 aa).

Residue Gln-163 participates in (2R)-2-phosphoglycerate binding. Glu-205 functions as the Proton donor in the catalytic mechanism. Positions 242, 286, and 313 each coordinate Mg(2+). Residues Lys-338, Arg-367, Ser-368, and Lys-389 each coordinate (2R)-2-phosphoglycerate. The Proton acceptor role is filled by Lys-338.

The protein belongs to the enolase family. Mg(2+) is required as a cofactor.

It is found in the cytoplasm. It localises to the secreted. The protein localises to the cell surface. It catalyses the reaction (2R)-2-phosphoglycerate = phosphoenolpyruvate + H2O. Its pathway is carbohydrate degradation; glycolysis; pyruvate from D-glyceraldehyde 3-phosphate: step 4/5. In terms of biological role, catalyzes the reversible conversion of 2-phosphoglycerate (2-PG) into phosphoenolpyruvate (PEP). It is essential for the degradation of carbohydrates via glycolysis. This is Enolase from Helicobacter acinonychis (strain Sheeba).